Reading from the N-terminus, the 689-residue chain is Elongation factor G (689 aa).

In terms of domain architecture, tr-type G spans 8–282 (ERTRNIGIMA…GVVAYMPSPL (275 aa)). GTP contacts are provided by residues 17–24 (AHIDAGKT), 81–85 (DTPGH), and 135–138 (NKMD).

Belongs to the TRAFAC class translation factor GTPase superfamily. Classic translation factor GTPase family. EF-G/EF-2 subfamily.

The protein resides in the cytoplasm. In terms of biological role, catalyzes the GTP-dependent ribosomal translocation step during translation elongation. During this step, the ribosome changes from the pre-translocational (PRE) to the post-translocational (POST) state as the newly formed A-site-bound peptidyl-tRNA and P-site-bound deacylated tRNA move to the P and E sites, respectively. Catalyzes the coordinated movement of the two tRNA molecules, the mRNA and conformational changes in the ribosome. This is Elongation factor G from Alkaliphilus metalliredigens (strain QYMF).